The chain runs to 146 residues: MDERFIAYIPTAGSNVAHAEITSPTLVKMMIRRAKKPILILGENLEENEKELISKLIEKFNLKTIKTPEEMNLMAIMKYLASSDYDLALFTGITYYYLAQAATHLKQFSNVVTISIDKYYQPNTLYSFPNLSKEEYLDYLRKLLEG.

The protein belongs to the CdhB family. In terms of assembly, heterotetramer of two alpha and two epsilon subunits. The ACDS complex is made up of alpha, epsilon, beta, gamma and delta subunits with a probable stoichiometry of (alpha(2)epsilon(2))(4)-beta(8)-(gamma(1)delta(1))(8).

Functionally, part of a complex that catalyzes the reversible cleavage of acetyl-CoA, allowing autotrophic growth from CO(2). The alpha-epsilon subcomponent functions as a carbon monoxide dehydrogenase. The precise role of the epsilon subunit is unclear; it may have a stabilizing role within the alpha(2)epsilon(2) component and/or be involved in electron transfer to FAD during a potential FAD-mediated CO oxidation. This chain is Acetyl-CoA decarbonylase/synthase complex subunit epsilon, found in Methanocaldococcus jannaschii (strain ATCC 43067 / DSM 2661 / JAL-1 / JCM 10045 / NBRC 100440) (Methanococcus jannaschii).